A 115-amino-acid polypeptide reads, in one-letter code: Large ribosomal subunit protein uL22 (115 aa).

It belongs to the universal ribosomal protein uL22 family. Part of the 50S ribosomal subunit.

Functionally, this protein binds specifically to 23S rRNA; its binding is stimulated by other ribosomal proteins, e.g. L4, L17, and L20. It is important during the early stages of 50S assembly. It makes multiple contacts with different domains of the 23S rRNA in the assembled 50S subunit and ribosome. The globular domain of the protein is located near the polypeptide exit tunnel on the outside of the subunit, while an extended beta-hairpin is found that lines the wall of the exit tunnel in the center of the 70S ribosome. In Coxiella burnetii (strain CbuG_Q212) (Coxiella burnetii (strain Q212)), this protein is Large ribosomal subunit protein uL22.